A 170-amino-acid polypeptide reads, in one-letter code: Putative apoptosis inhibitor ORF87 (170 aa).

2 BIR repeats span residues 22 to 92 (RIKS…PVGK) and 104 to 169 (RLKS…KLSS).

Functionally, may act as an apoptosis inhibitor. This Ostreid herpesvirus 1 (isolate France) (OsHV-1) protein is Putative apoptosis inhibitor ORF87.